A 301-amino-acid polypeptide reads, in one-letter code: MTTKHDVKTFQGFILTLQEYWAQQGCAIVQPLDMEVGAGTFHPQTFLRSLGPEPMSSAYVQPSRRPTDGRYGENPNRLQHYYQFQVVLKPSPDNIQELYLGSLEALGIDTKVHDIRFVEDNWESPTLGAWGLGWEIWLNGMEVTQFTYFQQVGGIECSPVTGEITYGLERLAMYIQEVDSVYDLVWTDGPLGRVTYGDIFHQNEVEQSTYNFEHADVDFMFTLFDQCEKMCMHLLSLEKPLPLPAYEQVMKASHAFNLLDARHAISVTERQRYILRVRTMAKGVAESYYQAREALGFPMCK.

The protein belongs to the class-II aminoacyl-tRNA synthetase family. Tetramer of two alpha and two beta subunits.

Its subcellular location is the cytoplasm. The enzyme catalyses tRNA(Gly) + glycine + ATP = glycyl-tRNA(Gly) + AMP + diphosphate. In Shewanella frigidimarina (strain NCIMB 400), this protein is Glycine--tRNA ligase alpha subunit.